The chain runs to 146 residues: uncharacterized protein (146 aa).

A disordered region spans residues 67–93 (DDNGMESGFCSGATSTGQSASTSPAPV). The span at 77–92 (SGATSTGQSASTSPAP) shows a compositional bias: low complexity.

This is an uncharacterized protein from Caenorhabditis elegans.